The chain runs to 47 residues: PhoP/PhoQ regulator MgrB (47 aa).

Residues 6–26 traverse the membrane as a helical segment; that stretch reads WLVLIVVVLACLVLWAQVINI.

The protein belongs to the MgrB family. May form homooligomers. Probably interacts with the periplasmic domain of PhoQ.

It is found in the cell inner membrane. PhoP-regulated transcription is redox-sensitive, being activated when the periplasm becomes more reducing. MgrB acts between DsbA/DsbB and PhoP/PhoQ in this pathway. Represses PhoP/PhoQ signaling, possibly by binding to the periplasmic domain of PhoQ, altering its activity and that of downstream effector PhoP. This Escherichia fergusonii (strain ATCC 35469 / DSM 13698 / CCUG 18766 / IAM 14443 / JCM 21226 / LMG 7866 / NBRC 102419 / NCTC 12128 / CDC 0568-73) protein is PhoP/PhoQ regulator MgrB.